Consider the following 61-residue polypeptide: Lens epithelial cell protein LEP503 (61 aa).

The protein is Lens epithelial cell protein LEP503 (Lenep) of Mus musculus (Mouse).